The sequence spans 277 residues: MAKRYFEVLNWASSFLEAQGKEGYAIHYVFLERKGWDKTQWLLHMQEEMPQEEEEQLKTDLAQLLTDYPAQYLLGQAEFYGHSFIVNEHTLIPRPETEELVERCLKANPDTPLTVVDVGTGTGAIAVSLKLARPNWRVIAIDLSEEALTVAKQNAQALGAGIEFYHGNGLQPVASEKIDLLISNPPYISEQEWYLMDASVRTYEPKTALFAENNGLALYQQLIHESQTMLKADGKIYFEIGFQQGAALQELLSAAYPQKTIKIEKDLSGNDRLAIAE.

Residues 119 to 123, aspartate 142, and asparagine 184 each bind S-adenosyl-L-methionine; that span reads GTGTG. Position 184–187 (184–187) interacts with substrate; sequence NPPY.

Belongs to the protein N5-glutamine methyltransferase family. PrmC subfamily.

The enzyme catalyses L-glutaminyl-[peptide chain release factor] + S-adenosyl-L-methionine = N(5)-methyl-L-glutaminyl-[peptide chain release factor] + S-adenosyl-L-homocysteine + H(+). Functionally, methylates the class 1 translation termination release factors RF1/PrfA and RF2/PrfB on the glutamine residue of the universally conserved GGQ motif. The chain is Release factor glutamine methyltransferase from Enterococcus faecalis (strain ATCC 700802 / V583).